Consider the following 379-residue polypeptide: Alcohol dehydrogenase class-3 (379 aa).

Position 2 is an N-acetylalanine (alanine 2). Cysteine 47 serves as a coordination point for Zn(2+). Histidine 48 serves as a coordination point for NAD(+). Threonine 49 and histidine 69 together coordinate an alcohol. Residues histidine 69, glutamate 70, cysteine 99, cysteine 102, cysteine 105, cysteine 113, and cysteine 177 each contribute to the Zn(2+) site. Residues 202–207 (GLGTVG), aspartate 226, lysine 231, isoleucine 272, 295–297 (VGV), 320–322 (TAF), and arginine 372 contribute to the NAD(+) site.

Belongs to the zinc-containing alcohol dehydrogenase family. Class-III subfamily. Homodimer. It depends on Zn(2+) as a cofactor. Ubiquitous.

It is found in the cytoplasm. It carries out the reaction a primary alcohol + NAD(+) = an aldehyde + NADH + H(+). The enzyme catalyses a secondary alcohol + NAD(+) = a ketone + NADH + H(+). It catalyses the reaction S-(hydroxymethyl)glutathione + NADP(+) = S-formylglutathione + NADPH + H(+). The catalysed reaction is S-(hydroxymethyl)glutathione + NAD(+) = S-formylglutathione + NADH + H(+). It carries out the reaction S-nitrosoglutathione + NADH + H(+) = S-(hydroxysulfenamide)glutathione + NAD(+). Repressed by thiol-modifying agents N-ethylmaleimide (NEM) and 5,5-dithio-bis-(2-nitrobenzoic acid) (DTNB), as well as by methyl methanethiosulfonate (MMTS) in a dose-dependent manner. Inhibited by hydrogen peroxide H(2)O(2). Its function is as follows. Alcohol dehydrogenase catalyzing the reduction of nitrosoglutathione. Can also use long-chain alcohols including cinnamyl alcohol and geraniol, and, to a lower extent, octanol. Plays a central role in formaldehyde detoxification. Not able to use ethanol (EtOH) as substrate. The sequence is that of Alcohol dehydrogenase class-3 from Arabidopsis thaliana (Mouse-ear cress).